The primary structure comprises 445 residues: 3-phosphoshikimate 1-carboxyvinyltransferase (445 aa).

3 residues coordinate 3-phosphoshikimate: Lys21, Ser22, and Arg26. Lys21 provides a ligand contact to phosphoenolpyruvate. Phosphoenolpyruvate-binding residues include Gly92 and Arg120. The 3-phosphoshikimate site is built by Ser165, Gln166, Asp307, and Lys334. Gln166 contacts phosphoenolpyruvate. Asp307 functions as the Proton acceptor in the catalytic mechanism. The phosphoenolpyruvate site is built by Arg338, Arg379, and Lys405.

The protein belongs to the EPSP synthase family. In terms of assembly, monomer.

It is found in the cytoplasm. It carries out the reaction 3-phosphoshikimate + phosphoenolpyruvate = 5-O-(1-carboxyvinyl)-3-phosphoshikimate + phosphate. The protein operates within metabolic intermediate biosynthesis; chorismate biosynthesis; chorismate from D-erythrose 4-phosphate and phosphoenolpyruvate: step 6/7. In terms of biological role, catalyzes the transfer of the enolpyruvyl moiety of phosphoenolpyruvate (PEP) to the 5-hydroxyl of shikimate-3-phosphate (S3P) to produce enolpyruvyl shikimate-3-phosphate and inorganic phosphate. This is 3-phosphoshikimate 1-carboxyvinyltransferase from Chlamydia abortus (strain DSM 27085 / S26/3) (Chlamydophila abortus).